Here is a 375-residue protein sequence, read N- to C-terminus: tRNA/tmRNA (uracil-C(5))-methyltransferase (375 aa).

S-adenosyl-L-methionine contacts are provided by Gln-197, Tyr-225, Asn-230, Glu-246, and Asp-306. Cys-331 acts as the Nucleophile in catalysis. Catalysis depends on Glu-365, which acts as the Proton acceptor.

Belongs to the class I-like SAM-binding methyltransferase superfamily. RNA M5U methyltransferase family. TrmA subfamily.

It catalyses the reaction uridine(54) in tRNA + S-adenosyl-L-methionine = 5-methyluridine(54) in tRNA + S-adenosyl-L-homocysteine + H(+). It carries out the reaction uridine(341) in tmRNA + S-adenosyl-L-methionine = 5-methyluridine(341) in tmRNA + S-adenosyl-L-homocysteine + H(+). Dual-specificity methyltransferase that catalyzes the formation of 5-methyluridine at position 54 (m5U54) in all tRNAs, and that of position 341 (m5U341) in tmRNA (transfer-mRNA). The chain is tRNA/tmRNA (uracil-C(5))-methyltransferase from Aliarcobacter butzleri (strain RM4018) (Arcobacter butzleri).